Consider the following 266-residue polypeptide: Inositol-1-monophosphatase (266 aa).

Glutamate 69, aspartate 86, leucine 88, and aspartate 89 together coordinate Mg(2+). Glutamate 69 serves as a coordination point for substrate. Residues 88 to 91, arginine 185, and aspartate 214 each bind substrate; that span reads LDGT. Aspartate 214 contributes to the Mg(2+) binding site.

It belongs to the inositol monophosphatase superfamily. It depends on Mg(2+) as a cofactor.

The enzyme catalyses a myo-inositol phosphate + H2O = myo-inositol + phosphate. This Mesorhizobium japonicum (strain LMG 29417 / CECT 9101 / MAFF 303099) (Mesorhizobium loti (strain MAFF 303099)) protein is Inositol-1-monophosphatase (suhB).